The primary structure comprises 376 residues: Thymidine kinase (376 aa).

A disordered region spans residues 1 to 47 (MASHAGQQHAPAFGQAARASGPTDGRAASRPSHRQGASEARGDPELP). 56-63 (GPHGVGKT) is an ATP binding site. The Proton acceptor role is filled by Glu-84. Residues Tyr-102 and Gln-126 each coordinate substrate. Arg-217 contributes to the ATP binding site. Arg-223 is a binding site for substrate.

The protein belongs to the herpesviridae thymidine kinase family. In terms of assembly, homodimer.

The enzyme catalyses thymidine + ATP = dTMP + ADP + H(+). In terms of biological role, catalyzes the transfer of the gamma-phospho group of ATP to thymidine to generate dTMP in the salvage pathway of pyrimidine synthesis. The dTMP serves as a substrate for DNA polymerase during viral DNA replication. Allows the virus to be reactivated and to grow in non-proliferative cells lacking a high concentration of phosphorylated nucleic acid precursors. The polypeptide is Thymidine kinase (Human herpesvirus 2 (strain 333) (HHV-2)).